We begin with the raw amino-acid sequence, 382 residues long: Methenyltetrahydrofolate synthase domain-containing protein (382 aa).

The RRM domain occupies 306-382 (TTVYLSDIPP…QAKCVSSQKM (77 aa)).

The protein is Methenyltetrahydrofolate synthase domain-containing protein (mthfsd) of Danio rerio (Zebrafish).